Here is a 293-residue protein sequence, read N- to C-terminus: Ribosomal RNA small subunit methyltransferase A (293 aa).

Positions 29, 31, 56, 77, 102, and 127 each coordinate S-adenosyl-L-methionine.

Belongs to the class I-like SAM-binding methyltransferase superfamily. rRNA adenine N(6)-methyltransferase family. RsmA subfamily.

It is found in the cytoplasm. It carries out the reaction adenosine(1518)/adenosine(1519) in 16S rRNA + 4 S-adenosyl-L-methionine = N(6)-dimethyladenosine(1518)/N(6)-dimethyladenosine(1519) in 16S rRNA + 4 S-adenosyl-L-homocysteine + 4 H(+). Specifically dimethylates two adjacent adenosines (A1518 and A1519) in the loop of a conserved hairpin near the 3'-end of 16S rRNA in the 30S particle. May play a critical role in biogenesis of 30S subunits. In Lysinibacillus sphaericus (strain C3-41), this protein is Ribosomal RNA small subunit methyltransferase A.